The primary structure comprises 388 residues: Cell adhesion molecule 4 (388 aa).

Positions 1–20 are cleaved as a signal peptide; the sequence is MGRARRFQWPLLLLWAAAAG. The 99-residue stretch at 21–119 folds into the Ig-like V-type domain; sequence PGTAQEVQTE…DTHHQIATLT (99 aa). Topologically, residues 25–324 are extracellular; sequence QEVQTENVTV…VEAQTSVPYA (300 aa). Residues Asn-31 and Asn-67 are each glycosylated (N-linked (GlcNAc...) asparagine). Disulfide bonds link Cys-44-Cys-104, Cys-145-Cys-199, and Cys-245-Cys-291. Ig-like C2-type domains follow at residues 124 to 219 and 224 to 307; these read PENP…YVLD and PTAR…YVLV. A glycan (N-linked (GlcNAc...) asparagine) is linked at Asn-286. The chain crosses the membrane as a helical span at residues 325 to 345; the sequence is IVGGILALLVFLIICVLVGMV. The Cytoplasmic portion of the chain corresponds to 346–388; that stretch reads WCSVRQKGSYLTHEASGLDEQGEAREAFLNGSDGHKRKEEFFI. Ser-361 is modified (phosphoserine).

It belongs to the nectin family. In terms of assembly, monomer and homodimer. N-glycosylated.

It localises to the membrane. Functionally, involved in the cell-cell adhesion. Has calcium- and magnesium-independent cell-cell adhesion activity. May have tumor-suppressor activity. This is Cell adhesion molecule 4 (Cadm4) from Rattus norvegicus (Rat).